A 1744-amino-acid polypeptide reads, in one-letter code: Tanabin (1744 aa).

The segment at M1–E12 is head. Residues V8–L48 are coil 1A. An IF rod domain is found at E13–I320. Residues R49–K60 form a linker 1 region. Residues H61 to M156 form a coil 1B region. The interval E157–P179 is linker 12. The tract at residues V180–W193 is coil 2A. Positions Q194–E199 are linker 2. The interval Y200 to E314 is coil 2B. A tail region spans residues A315 to F1744. Composition is skewed to basic and acidic residues over residues R341 to L371 and H785 to S815. 7 disordered regions span residues R341 to Q372, H785 to E816, E976 to E996, S1032 to D1093, D1340 to V1470, S1485 to N1506, and A1560 to H1722. The segment covering L980–G990 has biased composition (polar residues). Positions E1034–Q1056 are enriched in acidic residues. The segment covering V1074–E1086 has biased composition (basic and acidic residues). Acidic residues predominate over residues D1340–Q1351. Residues E1352–N1367 are compositionally biased toward basic and acidic residues. Residues E1368–D1377 are compositionally biased toward acidic residues. Basic and acidic residues predominate over residues H1386 to Q1398. The segment covering L1412–E1421 has biased composition (acidic residues). Positions P1423 to N1432 are enriched in basic and acidic residues. A compositionally biased stretch (polar residues) spans D1433–T1442. Positions D1445–E1460 are enriched in basic and acidic residues. The span at D1496–E1505 shows a compositional bias: acidic residues. Polar residues-rich tracts occupy residues E1576 to P1586, E1597 to S1621, and S1629 to T1639. Positions R1680–S1691 are enriched in acidic residues. Basic and acidic residues predominate over residues N1698–V1709.

Belongs to the intermediate filament family. Growth cones of embryonic vertebrate neurons.

This chain is Tanabin, found in Xenopus laevis (African clawed frog).